Here is a 334-residue protein sequence, read N- to C-terminus: Probable peptidoglycan endopeptidase LytE (334 aa).

Positions Met1–Ala25 are cleaved as a signal peptide. LysM domains are found at residues Gln26–Ile69, Ser86–Leu129, and Ser149–Val192. Disordered regions lie at residues Asn70–Lys89, Gly131–Val153, and Thr195–Ser215. Low complexity-rich tracts occupy residues Lys72–Thr87 and Ser132–Val153. A NlpC/P60 domain is found at Ser217–Phe334. Cys247 serves as the catalytic Nucleophile. His296 functions as the Proton acceptor in the catalytic mechanism. His308 is an active-site residue.

The protein belongs to the peptidase C40 family.

The protein localises to the secreted. It localises to the cell wall. Functionally, cell wall hydrolase that cleaves gamma-D-glutamate-meso-diaminopimelate bonds in peptidoglycan. Seems to play a role in cell separation during vegetative growth. The chain is Probable peptidoglycan endopeptidase LytE (lytE) from Bacillus subtilis (strain 168).